A 109-amino-acid polypeptide reads, in one-letter code: Protein ripply2 (109 aa).

The segment covering 1 to 15 has biased composition (polar residues); the sequence is MENITFTSGLNSEMD. Disordered stretches follow at residues 1–42 and 88–109; these read MENI…RPAD and YEDPDTEDEEDYSDEEDEKELR. Positions 20 to 23 match the WRPW motif motif; the sequence is WRPW. Positions 30-42 are enriched in basic and acidic residues; that stretch reads KAPDYKPYKRPAD. The tract at residues 53-88 is ripply homology domain; that stretch reads HPVKLFWPKSQCFDYLYEDAEVLLRNYPVQATICLY. Residues 89 to 109 are compositionally biased toward acidic residues; that stretch reads EDPDTEDEEDYSDEEDEKELR.

It belongs to the ripply family. As to expression, first expressed in the paraxial mesoderm at the 90% epiboly stage, and subsequently confined to the presomitic mesoderm. Expressed in the rostral compartment of S-I and S-II.

It localises to the nucleus. In terms of biological role, plays a role in somitogenesis. Required for somite segregation and establishment of rostrocaudal polarity in somites. This chain is Protein ripply2, found in Danio rerio (Zebrafish).